Consider the following 210-residue polypeptide: dITP/XTP pyrophosphatase (210 aa).

16 to 21 (SNNKGK) is a binding site for substrate. The Proton acceptor role is filled by Asp79. Residue Asp79 coordinates Mg(2+). Substrate contacts are provided by residues Ser80, 166 to 169 (FGYD), Lys189, and 194 to 195 (HR).

This sequence belongs to the HAM1 NTPase family. Homodimer. Requires Mg(2+) as cofactor.

It catalyses the reaction XTP + H2O = XMP + diphosphate + H(+). The catalysed reaction is dITP + H2O = dIMP + diphosphate + H(+). The enzyme catalyses ITP + H2O = IMP + diphosphate + H(+). Pyrophosphatase that catalyzes the hydrolysis of nucleoside triphosphates to their monophosphate derivatives, with a high preference for the non-canonical purine nucleotides XTP (xanthosine triphosphate), dITP (deoxyinosine triphosphate) and ITP. Seems to function as a house-cleaning enzyme that removes non-canonical purine nucleotides from the nucleotide pool, thus preventing their incorporation into DNA/RNA and avoiding chromosomal lesions. This is dITP/XTP pyrophosphatase from Acinetobacter baylyi (strain ATCC 33305 / BD413 / ADP1).